A 302-amino-acid chain; its full sequence is Short-chain dehydrogenase/reductase 3 (302 aa).

A run of 4 helical transmembrane segments spans residues 9-29 (LVMFPLQMIYLVVKAAVGLVL), 170-190 (IVCLNSVLALSAIPGAIDYCT), 195-215 (AFAFMESLTLGLLDCPGVSAT), and 253-273 (AVQLNQALLLLPWTMHALVIL). Ser-175 is a binding site for substrate. Residue Tyr-188 is the Proton acceptor of the active site.

Belongs to the short-chain dehydrogenases/reductases (SDR) family. As to expression, widely expressed with highest levels found in heart, placenta, lung, liver, kidney, pancreas, thyroid, testis, stomach, trachea and spinal cord. Lower levels found in skeletal muscle, intestine and lymph node. No expression detected in brain. In the retina, expressed in cone but not rod outer segments.

The protein resides in the membrane. The enzyme catalyses all-trans-retinol + NADP(+) = all-trans-retinal + NADPH + H(+). Its function is as follows. Catalyzes the reduction of all-trans-retinal to all-trans-retinol in the presence of NADPH. This chain is Short-chain dehydrogenase/reductase 3 (DHRS3), found in Homo sapiens (Human).